A 248-amino-acid polypeptide reads, in one-letter code: Orotidine 5'-phosphate decarboxylase (248 aa).

Substrate is bound by residues aspartate 22, lysine 44, 71 to 80, threonine 131, arginine 192, glutamine 201, glycine 221, and arginine 222; that span reads DLKFHDIPNT. Lysine 73 (proton donor) is an active-site residue.

Belongs to the OMP decarboxylase family. Type 1 subfamily. Homodimer.

It carries out the reaction orotidine 5'-phosphate + H(+) = UMP + CO2. It participates in pyrimidine metabolism; UMP biosynthesis via de novo pathway; UMP from orotate: step 2/2. In terms of biological role, catalyzes the decarboxylation of orotidine 5'-monophosphate (OMP) to uridine 5'-monophosphate (UMP). The chain is Orotidine 5'-phosphate decarboxylase from Photorhabdus laumondii subsp. laumondii (strain DSM 15139 / CIP 105565 / TT01) (Photorhabdus luminescens subsp. laumondii).